Consider the following 500-residue polypeptide: ERAD-associated E3 ubiquitin-protein ligase HRD1 (500 aa).

At 1-3 (MIR) the chain is on the cytoplasmic side. A helical membrane pass occupies residues 4–24 (LQTYAAFSLMATATAVYYAFS). The Lumenal segment spans residues 25–40 (SREQFYPAMVYLSTSK). A helical membrane pass occupies residues 41–61 (ICFVLLLNTGLVAMCVAWQLV). Topologically, residues 62 to 98 (KRLFLGTLREAEVERLNEQAWREVVEILFAVTIFRQD) are cytoplasmic. Residues 99–119 (FSVSFLAMVAALLLVKALHWL) traverse the membrane as a helical segment. Residues 120-135 (AQKRVEYIETTPSVPM) are Lumenal-facing. The helical transmembrane segment at 136–156 (LSHARIVSFMLFLLVVDCLFL) threads the bilayer. Topologically, residues 157 to 170 (SNSLRSLIHKREAS) are cytoplasmic. A helical membrane pass occupies residues 171–191 (VAIFFSFEYMILATSTVSTFV). At 192–225 (KYIFYVSDMLMEGQWEKKAVYTFYLELISDLVHL) the chain is on the lumenal side. The helical transmembrane segment at 226-246 (SLYMLFFIAIFLNYGVPLHLI) threads the bilayer. The Cytoplasmic segment spans residues 247-500 (RELYETFRNF…NENGEHTKSD (254 aa)). The RING-type; atypical zinc finger occupies 292 to 330 (CIICREEMTTAKKLLCGHLFHVHCLRSWLERQHTCPTCR). Disordered stretches follow at residues 337-375 (DNGRTAARPHGVHPGVQPVPGNGTPGSERAAGENISRRQ) and 398-438 (NNLN…SAPT). Positions 348–358 (VHPGVQPVPGN) are enriched in low complexity. Over residues 398 to 426 (NNLNRYSTPPQSTSNGPQSGEASTSNQSP) the composition is skewed to polar residues.

The protein belongs to the HRD1 family.

The protein localises to the endoplasmic reticulum membrane. The catalysed reaction is S-ubiquitinyl-[E2 ubiquitin-conjugating enzyme]-L-cysteine + [acceptor protein]-L-lysine = [E2 ubiquitin-conjugating enzyme]-L-cysteine + N(6)-ubiquitinyl-[acceptor protein]-L-lysine.. It functions in the pathway protein modification; protein ubiquitination. Its function is as follows. Probable component of the HRD1 ubiquitin ligase complex that mediates the rapid degradation of misfolded endoplasmic reticulum (ER) proteins, a process called ER-associated degradation (ERAD). This chain is ERAD-associated E3 ubiquitin-protein ligase HRD1, found in Oryza sativa subsp. japonica (Rice).